The sequence spans 699 residues: MAREVPIEKLRNIGIVAHIDAGKTTTTERIPTTGKDIQIGEVTEGAATMDWMPQEKERGITITAATTACYWTRNGERYQINIIDTPGHVDFSVEVVRSMKVLDGIVFIFSAVEGVQPQSEANWRWADRFKVPRIAFINKMDRLGADFYRVFKEIEEKLTIKPVAIQIPLGAEDQFEGVIDLMEMKAIRWLEVTLGAKYEVIDIPPGYQEKAQEWREKMIETIVETDDELMEKYLEAQEITLEELRKALRKATINRQLVPVLCGSAFKNKGVQPLLDAVIVTYPLPIDLPPVKGTNPNTGEEEERRPLDEEPFCAYAFKVMADPYAGQLTYIRVFSGTLKAGSYVYNATRDEKQRAGRLLLMHANSREEIQQVSAGEICAVVGLDAATGDTLCDEKHPIILEKLEFPDPVISMAIEPKTKKDQEKLSQVLNLSSLKEDPTFRATTDPETGQILIHGMGELHLEIMVDRMRREYGIEVNVGKPQVAYKETIRKKAIGEGKFIKQTGGRGQYGHAIIEIEPLPRGKGFEFIDDIHGGVIPKEFIPSVEKGVKEAMQNGILAGYPVVDVRVRLFDGSYHEVDSSDIAFQVAGSLAFKDAAKKADPVLLEPIMEVEVETPEDYVGDVIGDLNSRRGTIMGMENKGNITVVKAHVPLAEMFGYATTLRSLTQGRGTFIMRFSHYDEVPQHIAEKIIGERMAGKSS.

One can recognise a tr-type G domain in the interval 8–286 (EKLRNIGIVA…AVIVTYPLPI (279 aa)). Residues 17–24 (AHIDAGKT), 84–88 (DTPGH), and 138–141 (NKMD) contribute to the GTP site.

The protein belongs to the TRAFAC class translation factor GTPase superfamily. Classic translation factor GTPase family. EF-G/EF-2 subfamily.

It localises to the cytoplasm. Catalyzes the GTP-dependent ribosomal translocation step during translation elongation. During this step, the ribosome changes from the pre-translocational (PRE) to the post-translocational (POST) state as the newly formed A-site-bound peptidyl-tRNA and P-site-bound deacylated tRNA move to the P and E sites, respectively. Catalyzes the coordinated movement of the two tRNA molecules, the mRNA and conformational changes in the ribosome. The protein is Elongation factor G (fusA) of Aquifex pyrophilus.